The sequence spans 90 residues: UPF0223 protein SH1855 (90 aa).

Belongs to the UPF0223 family.

This Staphylococcus haemolyticus (strain JCSC1435) protein is UPF0223 protein SH1855.